A 691-amino-acid chain; its full sequence is Elongation factor G (691 aa).

Residues 8–282 (ERVRNIGIAA…AVVDYLPAPI (275 aa)) enclose the tr-type G domain. Residues 17–24 (AHIDAGKT), 81–85 (DTPGH), and 135–138 (NKMD) each bind GTP.

It belongs to the TRAFAC class translation factor GTPase superfamily. Classic translation factor GTPase family. EF-G/EF-2 subfamily.

The protein localises to the cytoplasm. Its function is as follows. Catalyzes the GTP-dependent ribosomal translocation step during translation elongation. During this step, the ribosome changes from the pre-translocational (PRE) to the post-translocational (POST) state as the newly formed A-site-bound peptidyl-tRNA and P-site-bound deacylated tRNA move to the P and E sites, respectively. Catalyzes the coordinated movement of the two tRNA molecules, the mRNA and conformational changes in the ribosome. The sequence is that of Elongation factor G from Prochlorococcus marinus subsp. pastoris (strain CCMP1986 / NIES-2087 / MED4).